A 446-amino-acid polypeptide reads, in one-letter code: UDP-N-acetylmuramate--L-alanine ligase (446 aa).

122–128 (GTHGKTT) serves as a coordination point for ATP.

It belongs to the MurCDEF family.

It localises to the cytoplasm. It carries out the reaction UDP-N-acetyl-alpha-D-muramate + L-alanine + ATP = UDP-N-acetyl-alpha-D-muramoyl-L-alanine + ADP + phosphate + H(+). Its pathway is cell wall biogenesis; peptidoglycan biosynthesis. Functionally, cell wall formation. The sequence is that of UDP-N-acetylmuramate--L-alanine ligase from Nocardioides sp. (strain ATCC BAA-499 / JS614).